The following is a 528-amino-acid chain: MSTVNVQIGLHELLNGSNAQIQLSVPQLVEKVLMRNEGKLTSTGAVSASTGKYTGRSPKDKFIVKEASVADKIAWGAVNQPISEEHFNKLYTKVLEYLKEKEELFVFKGFAGADRNYRLPIQVINEYAWHNLFVHQLFIRPTEEELTTHESEFTIVSAPNFKADPAVDGTNSEAFIMVSFEKRIVLIGGTEYAGEMKKSIFSIMNFLLPEQDILSMHCSANVGEEGDVALFFGLSGTGKTTLSADPNRKLIGDDEHGWSDNGVFNIEGGCYAKCVNLSHEKEPQIFDAITFGSVLENVIINDQTRIADYNDTTLTENTRAAYPMHAIDNIILPSVAGHPNTIIFLTADASGVLPPISKLSKEQAMYHFLSGYTSKLAGTERGVTSPQATFSTCFGSPFLPLDASRYAEMLGEKIEKHDAKVFLVNTGWTGGEYGVGKRMNLGYTRAMIQAALNGELAKTETAKHDIFGLEVPLHVPGVPDEVLMPEQTWADKAAYKAKAIELANEFKANFKKFDSVSEDIINLGGPIA.

3 residues coordinate substrate: Arg-56, Tyr-192, and Lys-198. ATP-binding positions include Lys-198, His-217, and 233 to 241 (GLSGTGKTT). Mn(2+) is bound by residues Lys-198 and His-217. Asp-254 contacts Mn(2+). Residues Glu-282, Arg-319, and Thr-444 each contribute to the ATP site. A substrate-binding site is contributed by Arg-319.

The protein belongs to the phosphoenolpyruvate carboxykinase (ATP) family. Requires Mn(2+) as cofactor.

The protein resides in the cytoplasm. The catalysed reaction is oxaloacetate + ATP = phosphoenolpyruvate + ADP + CO2. The protein operates within carbohydrate biosynthesis; gluconeogenesis. In terms of biological role, involved in the gluconeogenesis. Catalyzes the conversion of oxaloacetate (OAA) to phosphoenolpyruvate (PEP) through direct phosphoryl transfer between the nucleoside triphosphate and OAA. This is Phosphoenolpyruvate carboxykinase (ATP) from Bacillus anthracis (strain A0248).